The following is a 754-amino-acid chain: Ribosomal RNA large subunit methyltransferase K/L (754 aa).

Residues 46 to 157 (TAYRLCLWSR…RGEAILSLDL (112 aa)) form the THUMP domain.

This sequence belongs to the methyltransferase superfamily. RlmKL family.

Its subcellular location is the cytoplasm. The enzyme catalyses guanosine(2445) in 23S rRNA + S-adenosyl-L-methionine = N(2)-methylguanosine(2445) in 23S rRNA + S-adenosyl-L-homocysteine + H(+). It catalyses the reaction guanosine(2069) in 23S rRNA + S-adenosyl-L-methionine = N(2)-methylguanosine(2069) in 23S rRNA + S-adenosyl-L-homocysteine + H(+). Functionally, specifically methylates the guanine in position 2445 (m2G2445) and the guanine in position 2069 (m7G2069) of 23S rRNA. In Pseudomonas fluorescens (strain ATCC BAA-477 / NRRL B-23932 / Pf-5), this protein is Ribosomal RNA large subunit methyltransferase K/L.